The sequence spans 60 residues: Metallothionein (60 aa).

Met1 is subject to N-acetylmethionine. A beta region spans residues 1 to 28 (MDPCECSKTGTCNCGGSCTCKNCSCTTC). The a divalent metal cation site is built by Cys4, Cys6, Cys12, Cys14, Cys18, Cys20, Cys23, Cys25, Cys28, Cys32, Cys33, Cys35, Cys36, Cys40, Cys43, Cys47, Cys49, Cys54, Cys58, and Cys59. Positions 29–60 (TKSCCPCCPSGCPKCASGCVCKGKTCDTTCCQ) are alpha.

This sequence belongs to the metallothionein superfamily. Type 1 family.

Its function is as follows. Metallothioneins have a high content of cysteine residues that bind various heavy metals. The polypeptide is Metallothionein (mt) (Pseudopleuronectes americanus (Winter flounder)).